The following is a 141-amino-acid chain: Mite group 2 allergen Tyr p 2 (141 aa).

A signal peptide spans 1 to 15 (MKFLILFALVAVAAA). Disulfide bonds link Cys-23-Cys-132, Cys-36-Cys-41, and Cys-87-Cys-92. The N-linked (GlcNAc...) asparagine glycan is linked to Asn-103.

This sequence belongs to the NPC2 family.

Its subcellular location is the secreted. The protein is Mite group 2 allergen Tyr p 2 of Tyrophagus putrescentiae (Mold mite).